A 333-amino-acid polypeptide reads, in one-letter code: L-lactate dehydrogenase B chain (333 aa).

NAD(+)-binding positions include 29-57 and Arg-99; that span reads GQVG…IEDK. Substrate contacts are provided by Arg-106, Asn-138, and Arg-169. Asn-138 is an NAD(+) binding site. The active-site Proton acceptor is the His-193. A substrate-binding site is contributed by Thr-248.

This sequence belongs to the LDH/MDH superfamily. LDH family. Homotetramer.

It localises to the cytoplasm. It catalyses the reaction (S)-lactate + NAD(+) = pyruvate + NADH + H(+). Its pathway is fermentation; pyruvate fermentation to lactate; (S)-lactate from pyruvate: step 1/1. Its function is as follows. Interconverts simultaneously and stereospecifically pyruvate and lactate with concomitant interconversion of NADH and NAD(+). The polypeptide is L-lactate dehydrogenase B chain (ldhb) (Anguilla rostrata (American eel)).